We begin with the raw amino-acid sequence, 190 residues long: MAPRSYSKTAKVPRRPFEAARLDSELKLVGEYGLRNKREVWRVLLTLSKIRRAARELLTLDEKDPKRLFEGNALIRRLVRVGVLDESRMKLDYVLALKAEDFLERRLQTLVYKLGLAKSIHHARVLIRQRHIRVGKQIVNVPSFVVRLDSQKHIDFALTSPFGGGRPGRVRRKKAKAAEGGDGDAEEDEE.

Residues Arg-105–Gly-181 enclose the S4 RNA-binding domain. The segment at Gly-163–Glu-190 is disordered. Positions Gly-181–Glu-190 are enriched in acidic residues.

This sequence belongs to the universal ribosomal protein uS4 family.

The chain is Small ribosomal subunit protein uS4 (RPS9) from Podospora anserina (Pleurage anserina).